Consider the following 310-residue polypeptide: Ribose-phosphate pyrophosphokinase (310 aa).

ATP-binding positions include 33-35 (DGE) and 92-93 (RQ). Histidine 127 and aspartate 166 together coordinate Mg(2+). Lysine 189 is a catalytic residue. Residues arginine 191, aspartate 215, and 219-223 (DTAGT) each bind D-ribose 5-phosphate.

This sequence belongs to the ribose-phosphate pyrophosphokinase family. Class I subfamily. In terms of assembly, homohexamer. It depends on Mg(2+) as a cofactor.

Its subcellular location is the cytoplasm. The enzyme catalyses D-ribose 5-phosphate + ATP = 5-phospho-alpha-D-ribose 1-diphosphate + AMP + H(+). Its pathway is metabolic intermediate biosynthesis; 5-phospho-alpha-D-ribose 1-diphosphate biosynthesis; 5-phospho-alpha-D-ribose 1-diphosphate from D-ribose 5-phosphate (route I): step 1/1. In terms of biological role, involved in the biosynthesis of the central metabolite phospho-alpha-D-ribosyl-1-pyrophosphate (PRPP) via the transfer of pyrophosphoryl group from ATP to 1-hydroxyl of ribose-5-phosphate (Rib-5-P). The polypeptide is Ribose-phosphate pyrophosphokinase (Bordetella pertussis (strain Tohama I / ATCC BAA-589 / NCTC 13251)).